The chain runs to 199 residues: NADH-quinone oxidoreductase subunit I (199 aa).

4Fe-4S ferredoxin-type domains lie at 45-75 (LNRH…VEGA) and 91-120 (RVYQ…MSNE). Residues cysteine 55, cysteine 58, cysteine 61, cysteine 65, cysteine 100, cysteine 103, cysteine 106, and cysteine 110 each contribute to the [4Fe-4S] cluster site. Residues 164-199 (GTPAAHMLSGEDDAASETTLDRSDDHSATYEEAERP) form a disordered region. Positions 182-199 (TLDRSDDHSATYEEAERP) are enriched in basic and acidic residues.

The protein belongs to the complex I 23 kDa subunit family. As to quaternary structure, NDH-1 is composed of 14 different subunits. Subunits NuoA, H, J, K, L, M, N constitute the membrane sector of the complex. [4Fe-4S] cluster serves as cofactor.

It localises to the cell membrane. The catalysed reaction is a quinone + NADH + 5 H(+)(in) = a quinol + NAD(+) + 4 H(+)(out). In terms of biological role, NDH-1 shuttles electrons from NADH, via FMN and iron-sulfur (Fe-S) centers, to quinones in the respiratory chain. The immediate electron acceptor for the enzyme in this species is believed to be ubiquinone. Couples the redox reaction to proton translocation (for every two electrons transferred, four hydrogen ions are translocated across the cytoplasmic membrane), and thus conserves the redox energy in a proton gradient. The protein is NADH-quinone oxidoreductase subunit I of Acidothermus cellulolyticus (strain ATCC 43068 / DSM 8971 / 11B).